We begin with the raw amino-acid sequence, 185 residues long: Elongation factor P (185 aa).

The protein belongs to the elongation factor P family.

The protein resides in the cytoplasm. It participates in protein biosynthesis; polypeptide chain elongation. Involved in peptide bond synthesis. Stimulates efficient translation and peptide-bond synthesis on native or reconstituted 70S ribosomes in vitro. Probably functions indirectly by altering the affinity of the ribosome for aminoacyl-tRNA, thus increasing their reactivity as acceptors for peptidyl transferase. This is Elongation factor P from Mesomycoplasma hyopneumoniae (strain 232) (Mycoplasma hyopneumoniae).